The primary structure comprises 147 residues: uncharacterized protein (147 aa).

4Fe-4S ferredoxin-type domains lie at 80 to 109 (WYPKIDYNRCKNCEKCISFCPRGVYDAENG) and 110 to 141 (KVVVKYPYSCIVNCNACSIMCCENNAIIFPDE). [4Fe-4S] cluster-binding residues include Cys-89, Cys-92, Cys-95, Cys-99, Cys-119, Cys-123, Cys-126, and Cys-130.

The cofactor is [4Fe-4S] cluster.

This is an uncharacterized protein from Methanocaldococcus jannaschii (strain ATCC 43067 / DSM 2661 / JAL-1 / JCM 10045 / NBRC 100440) (Methanococcus jannaschii).